The chain runs to 153 residues: Cytochrome c-554 (153 aa).

An N-terminal signal peptide occupies residues 1-20; sequence MRPIPALALTFSLVAMPALA. Glutamine 21 is modified (pyrrolidone carboxylic acid). 4 residues coordinate heme c: methionine 37, cysteine 142, cysteine 145, and histidine 146.

In terms of processing, binds 1 heme c group covalently per subunit.

It is found in the periplasm. Monoheme c-type cytochrome, that is particularly expressed when cells generate energy via aerobic respiration. The chain is Cytochrome c-554 (cycF) from Cereibacter sphaeroides (strain ATCC 17023 / DSM 158 / JCM 6121 / CCUG 31486 / LMG 2827 / NBRC 12203 / NCIMB 8253 / ATH 2.4.1.) (Rhodobacter sphaeroides).